The primary structure comprises 203 residues: Large ribosomal subunit protein bL25 (203 aa).

The protein belongs to the bacterial ribosomal protein bL25 family. CTC subfamily. As to quaternary structure, part of the 50S ribosomal subunit; part of the 5S rRNA/L5/L18/L25 subcomplex. Contacts the 5S rRNA. Binds to the 5S rRNA independently of L5 and L18.

Functionally, this is one of the proteins that binds to the 5S RNA in the ribosome where it forms part of the central protuberance. The polypeptide is Large ribosomal subunit protein bL25 (Cereibacter sphaeroides (strain ATCC 17029 / ATH 2.4.9) (Rhodobacter sphaeroides)).